Consider the following 545-residue polypeptide: Chaperonin GroEL (545 aa).

Residues 29–32, Lys-50, 86–90, Gly-415, and Asp-495 each bind ATP; these read TLGP and DGTTT.

This sequence belongs to the chaperonin (HSP60) family. In terms of assembly, forms a cylinder of 14 subunits composed of two heptameric rings stacked back-to-back. Interacts with the co-chaperonin GroES.

The protein localises to the cytoplasm. It catalyses the reaction ATP + H2O + a folded polypeptide = ADP + phosphate + an unfolded polypeptide.. Its function is as follows. Together with its co-chaperonin GroES, plays an essential role in assisting protein folding. The GroEL-GroES system forms a nano-cage that allows encapsulation of the non-native substrate proteins and provides a physical environment optimized to promote and accelerate protein folding. The protein is Chaperonin GroEL of Bacteroides thetaiotaomicron (strain ATCC 29148 / DSM 2079 / JCM 5827 / CCUG 10774 / NCTC 10582 / VPI-5482 / E50).